Reading from the N-terminus, the 461-residue chain is Deoxyguanosinetriphosphate triphosphohydrolase-like protein (461 aa).

The disordered stretch occupies residues 22–41 (ERFLPDPPREKDNRPPFRRD). Positions 24–41 (FLPDPPREKDNRPPFRRD) are enriched in basic and acidic residues. Positions 72 to 285 (RLTHSLEVAQ…MELADDIAYG (214 aa)) constitute an HD domain.

The protein belongs to the dGTPase family. Type 2 subfamily.

This chain is Deoxyguanosinetriphosphate triphosphohydrolase-like protein, found in Haemophilus influenzae (strain PittEE).